The primary structure comprises 511 residues: Arginine-containing cyclodipeptide synthase eshA (511 aa).

Residues 413–417 (DDSAE) carry the Conserved DDXXE motif motif.

It belongs to the arginine-containing cyclodipeptide synthase family.

It catalyses the reaction L-arginyl-tRNA(Arg) + L-leucyl-tRNA(Leu) = cyclo(L-arginyl-L-leucyl) + tRNA(Arg) + tRNA(Leu) + 2 H(+). Its pathway is secondary metabolite biosynthesis. In terms of biological role, arginine-containing cyclodipeptide synthase; part of the cluster that mediates the biosynthesis of a highly modified cyclo-arginine-leucine dipeptide (cRW). Within the pathway, eshA acts as the scaffold-generating enzyme and is responsible for formation of the cyclo-Arg-Leu diketopiperazine (cRL) from L-arginyl-tRNA(Arg) + L-Leucyl-tRNA(Leu). Additional enzymes from the cluster then further modify the cyclo-Arg-Leu diketopiperazine (cRW) scaffold. In Penicillium shearii (Eupenicillium shearii), this protein is Arginine-containing cyclodipeptide synthase eshA.